The primary structure comprises 922 residues: DNA gyrase subunit A (922 aa).

Residues 1 to 14 (MTETPTDGGSTPPS) are compositionally biased toward low complexity. The interval 1–24 (MTETPTDGGSTPPSDGGGPGGRIE) is disordered. Residues 49–518 (LPDVRDGLKP…ADGDLSMEDL (470 aa)) form the Topo IIA-type catalytic domain. Tyr-137 (O-(5'-phospho-DNA)-tyrosine intermediate) is an active-site residue. The GyrA-box signature appears at 545-551 (QRRGGKG). The interval 861–922 (EANGDDELDE…TEPDPGESDG (62 aa)) is disordered. 2 stretches are compositionally biased toward acidic residues: residues 863–890 (NGDD…DESA) and 912–922 (DTEPDPGESDG).

It belongs to the type II topoisomerase GyrA/ParC subunit family. In terms of assembly, heterotetramer, composed of two GyrA and two GyrB chains. In the heterotetramer, GyrA contains the active site tyrosine that forms a transient covalent intermediate with DNA, while GyrB binds cofactors and catalyzes ATP hydrolysis.

It localises to the cytoplasm. The catalysed reaction is ATP-dependent breakage, passage and rejoining of double-stranded DNA.. Functionally, a type II topoisomerase that negatively supercoils closed circular double-stranded (ds) DNA in an ATP-dependent manner to modulate DNA topology and maintain chromosomes in an underwound state. Negative supercoiling favors strand separation, and DNA replication, transcription, recombination and repair, all of which involve strand separation. Also able to catalyze the interconversion of other topological isomers of dsDNA rings, including catenanes and knotted rings. Type II topoisomerases break and join 2 DNA strands simultaneously in an ATP-dependent manner. The chain is DNA gyrase subunit A from Nocardioides sp. (strain ATCC BAA-499 / JS614).